Consider the following 840-residue polypeptide: Probable alpha-glucuronidase A (840 aa).

The signal sequence occupies residues 1–19 (MWSGIPIFALLSSIGIAAA). N-linked (GlcNAc...) asparagine glycosylation is found at N50, N149, N222, N262, N279, N310, N465, N527, N576, N610, N682, N723, and N732.

This sequence belongs to the glycosyl hydrolase 67 family.

The protein localises to the secreted. It catalyses the reaction an alpha-D-glucuronoside + H2O = D-glucuronate + an alcohol. Alpha-glucuronidase involved in the hydrolysis of xylan, a major structural heterogeneous polysaccharide found in plant biomass representing the second most abundant polysaccharide in the biosphere, after cellulose. Releases 4-O-methylglucuronic acid from xylan. The protein is Probable alpha-glucuronidase A (aguA) of Aspergillus fumigatus (strain CBS 144.89 / FGSC A1163 / CEA10) (Neosartorya fumigata).